Here is a 967-residue protein sequence, read N- to C-terminus: Leucine--tRNA ligase (967 aa).

The short motif at 43–53 (PYLSGHLHVGH) is the 'HIGH' region element. The short motif at 650–654 (KMSKS) is the 'KMSKS' region element. ATP is bound at residue lysine 653.

The protein belongs to the class-I aminoacyl-tRNA synthetase family.

It is found in the cytoplasm. The catalysed reaction is tRNA(Leu) + L-leucine + ATP = L-leucyl-tRNA(Leu) + AMP + diphosphate. The protein is Leucine--tRNA ligase of Thermococcus onnurineus (strain NA1).